The chain runs to 346 residues: MGENLPLLLSAALGKKVTRPPVWMMRQAGRYMKIYRDLRERYPSFRERSENPELSYEISMQPFHAFKPDGVILFSDILTPLPGMGINFEIIESKGPIIEDPIRTLSQIESLKELNPSESLSFVGQVLSSLKKDVNNEATVLGFVGAPWTLAAYVVEGKSSKNYSLIKSMAFKEPDLLHKLLDHFAKSIGEYLKFQIKSGAQVVQIFDSWAGQLSPQDYDIFAGPYQKKVVDIVKEEYPDTPVILYISGSAGVIERMAKTGVDIISLDWTVDIEEACKRIPDEIGIQGNVDPGILFGNKESIKERIDDTFNKIKDRKYILNLGHGILPGTPEENAQTFFEHGKKLTY.

Residues 26–30, D76, Y153, S208, and H323 contribute to the substrate site; that span reads RQAGR.

This sequence belongs to the uroporphyrinogen decarboxylase family. Homodimer.

The protein localises to the cytoplasm. It catalyses the reaction uroporphyrinogen III + 4 H(+) = coproporphyrinogen III + 4 CO2. Its pathway is porphyrin-containing compound metabolism; protoporphyrin-IX biosynthesis; coproporphyrinogen-III from 5-aminolevulinate: step 4/4. Functionally, catalyzes the decarboxylation of four acetate groups of uroporphyrinogen-III to yield coproporphyrinogen-III. The polypeptide is Uroporphyrinogen decarboxylase (Prochlorococcus marinus (strain MIT 9312)).